Consider the following 138-residue polypeptide: Small ribosomal subunit protein uS11c (138 aa).

Residues M1–R23 form a disordered region. Basic residues predominate over residues G9–R23.

It belongs to the universal ribosomal protein uS11 family. Part of the 30S ribosomal subunit.

Its subcellular location is the plastid. The protein resides in the chloroplast. This Daucus carota (Wild carrot) protein is Small ribosomal subunit protein uS11c.